Here is a 162-residue protein sequence, read N- to C-terminus: SsrA-binding protein (162 aa).

Belongs to the SmpB family.

Its subcellular location is the cytoplasm. In terms of biological role, required for rescue of stalled ribosomes mediated by trans-translation. Binds to transfer-messenger RNA (tmRNA), required for stable association of tmRNA with ribosomes. tmRNA and SmpB together mimic tRNA shape, replacing the anticodon stem-loop with SmpB. tmRNA is encoded by the ssrA gene; the 2 termini fold to resemble tRNA(Ala) and it encodes a 'tag peptide', a short internal open reading frame. During trans-translation Ala-aminoacylated tmRNA acts like a tRNA, entering the A-site of stalled ribosomes, displacing the stalled mRNA. The ribosome then switches to translate the ORF on the tmRNA; the nascent peptide is terminated with the 'tag peptide' encoded by the tmRNA and targeted for degradation. The ribosome is freed to recommence translation, which seems to be the essential function of trans-translation. This chain is SsrA-binding protein, found in Sorangium cellulosum (strain So ce56) (Polyangium cellulosum (strain So ce56)).